The sequence spans 163 residues: Nucleotide-binding protein Clos_1967 (163 aa).

Belongs to the YajQ family.

Its function is as follows. Nucleotide-binding protein. The chain is Nucleotide-binding protein Clos_1967 from Alkaliphilus oremlandii (strain OhILAs) (Clostridium oremlandii (strain OhILAs)).